A 368-amino-acid polypeptide reads, in one-letter code: D-alanine--D-alanine ligase (368 aa).

Residues 151 to 358 form the ATP-grasp domain; the sequence is KKLLAAEGLP…YGTLVSTLVD (208 aa). 179–234 contacts ATP; sequence RSRLHLPVFVKPARGGSSIGITRVAEWAALDDAIAHARRHDPKVIVESGIAGREVE. The Mg(2+) site is built by Asp313, Glu325, and Asn327.

It belongs to the D-alanine--D-alanine ligase family. The cofactor is Mg(2+). Mn(2+) is required as a cofactor.

Its subcellular location is the cytoplasm. The enzyme catalyses 2 D-alanine + ATP = D-alanyl-D-alanine + ADP + phosphate + H(+). It functions in the pathway cell wall biogenesis; peptidoglycan biosynthesis. Its function is as follows. Cell wall formation. This Rhodococcus opacus (strain B4) protein is D-alanine--D-alanine ligase.